The primary structure comprises 513 residues: Activin receptor type-2A (513 aa).

Positions Met-1–Gly-19 are cleaved as a signal peptide. Residues Ala-20 to Pro-135 are Extracellular-facing. Intrachain disulfides connect Cys-30-Cys-60, Cys-50-Cys-78, Cys-85-Cys-104, Cys-91-Cys-103, and Cys-105-Cys-110. Residues Asn-43 and Asn-66 are each glycosylated (N-linked (GlcNAc...) asparagine). The chain crosses the membrane as a helical span at residues Tyr-136–Tyr-161. Residues Arg-162–Leu-513 lie on the Cytoplasmic side of the membrane. Residues Leu-192 to Leu-485 form the Protein kinase domain. ATP is bound by residues Lys-198–Val-206 and Lys-219. Asp-322 serves as the catalytic Proton acceptor.

The protein belongs to the protein kinase superfamily. TKL Ser/Thr protein kinase family. TGFB receptor subfamily. In terms of assembly, part of a complex consisting of MAGI2/ARIP1, ACVR2A, ACVR1B and SMAD3. Interacts with MAGI2/ARIP1. Interacts with type I receptor ACVR1. Interacts with BMP7. Interacts with TSC22D1/TSC-22. Interacts with activin A/INHBA. Mg(2+) is required as a cofactor. Mn(2+) serves as cofactor.

It is found in the cell membrane. The catalysed reaction is L-threonyl-[receptor-protein] + ATP = O-phospho-L-threonyl-[receptor-protein] + ADP + H(+). It catalyses the reaction L-seryl-[receptor-protein] + ATP = O-phospho-L-seryl-[receptor-protein] + ADP + H(+). Functionally, on ligand binding, forms a receptor complex consisting of two type II and two type I transmembrane serine/threonine kinases. Type II receptors phosphorylate and activate type I receptors which autophosphorylate, then bind and activate SMAD transcriptional regulators. Receptor for activin A, activin B and inhibin A. Mediates induction of adipogenesis by GDF6. The sequence is that of Activin receptor type-2A (ACVR2A) from Bos taurus (Bovine).